The sequence spans 428 residues: Histidine--tRNA ligase (428 aa).

It belongs to the class-II aminoacyl-tRNA synthetase family. Homodimer.

It is found in the cytoplasm. The catalysed reaction is tRNA(His) + L-histidine + ATP = L-histidyl-tRNA(His) + AMP + diphosphate + H(+). The sequence is that of Histidine--tRNA ligase from Ectopseudomonas mendocina (strain ymp) (Pseudomonas mendocina).